Consider the following 674-residue polypeptide: Sterile alpha motif domain-containing protein 15 (674 aa).

A compositionally biased stretch (acidic residues) spans 1-18 (MAEVPEDYDSGPDEDGEL). The disordered stretch occupies residues 1-448 (MAEVPEDYDS…LEHREPKRGK (448 aa)). 3 stretches are compositionally biased toward basic and acidic residues: residues 87–142 (IAKE…EEAK), 195–223 (ESLRVQHEETGLEPPEQTKQDFPSEKLGE), and 236–274 (TKPETPEETQRESTEKKRTEPPEQARLEFLEKEPRKSSE). Over residues 276-290 (AGLEPPEETQPEVPE) the composition is skewed to acidic residues. Basic and acidic residues-rich tracts occupy residues 291-322 (EMQRKATEEKGTELPERTKPDFPDHKPRKSTD), 330-346 (EEIKLEFPEEESRKTNE), 354-372 (EMMKPESPEEIRKSNEKKN), and 391-429 (VEEKTQTKPTEKILELPDETKPRETHVEFSKEDRPEPIK). Positions 545–608 (WDPEEVAEWI…SRHTQELLEI (64 aa)) constitute an SAM domain.

The protein is Sterile alpha motif domain-containing protein 15 (SAMD15) of Homo sapiens (Human).